A 388-amino-acid chain; its full sequence is MYLQTLHLRNFRNYQHQHVDFSAQKTILIGNNAQGKSNLLEAVELLASLKTHRTSRDADLVKQGEATARIQAQIQRGYGTVDFDLLLRNQGGRTLKLNGEILRRQLDGLGTLNAVEFSCLDLDLVRGGPDCRRQWIDNLLIQLEPVYARILQEYQQVLKQRNALLRTAKKLHRNQAAIPTDLTQQLTLWDLQLAATGSRVTRRRSRGLLRLMPLAQAWHRDISSQTETLEITYCPNIPWQQDDPHHVQQACLDKIEQRRQAEQHQGSSMVGPHRDEIEFSINGTPARFYGSQGQQRTLVLALKLAELQLIETIIGEPPLLLLDDVLAELDPSRQNQLLDTIQTRFQTLITTTHLNSFGADWLKHSQILTVNQGTLQPYARPLSETYGP.

30 to 37 (GNNAQGKS) serves as a coordination point for ATP.

Belongs to the RecF family.

It localises to the cytoplasm. The RecF protein is involved in DNA metabolism; it is required for DNA replication and normal SOS inducibility. RecF binds preferentially to single-stranded, linear DNA. It also seems to bind ATP. The polypeptide is DNA replication and repair protein RecF (Picosynechococcus sp. (strain ATCC 27264 / PCC 7002 / PR-6) (Agmenellum quadruplicatum)).